Consider the following 107-residue polypeptide: uncharacterized protein (107 aa).

This is an uncharacterized protein from Acidianus bottle-shaped virus (isolate Italy/Pozzuoli) (ABV).